A 165-amino-acid chain; its full sequence is Lipoprotein signal peptidase (165 aa).

A run of 5 helical transmembrane segments spans residues 10 to 30 (LKWL…KYWV), 42 to 62 (VLPG…GLFT), 71 to 91 (LFVW…YKLI), 105 to 125 (IGGA…VDFI), and 133 to 153 (HWPT…IVTI). Active-site residues include Asp-123 and Asp-141.

Belongs to the peptidase A8 family.

The protein localises to the cell inner membrane. The catalysed reaction is Release of signal peptides from bacterial membrane prolipoproteins. Hydrolyzes -Xaa-Yaa-Zaa-|-(S,diacylglyceryl)Cys-, in which Xaa is hydrophobic (preferably Leu), and Yaa (Ala or Ser) and Zaa (Gly or Ala) have small, neutral side chains.. The protein operates within protein modification; lipoprotein biosynthesis (signal peptide cleavage). In terms of biological role, this protein specifically catalyzes the removal of signal peptides from prolipoproteins. The sequence is that of Lipoprotein signal peptidase from Blochmanniella pennsylvanica (strain BPEN).